The primary structure comprises 338 residues: Ketol-acid reductoisomerase (NADP(+)) (338 aa).

One can recognise a KARI N-terminal Rossmann domain in the interval 1 to 181 (MNVFYDKDAD…GGGRAGIIET (181 aa)). NADP(+) is bound by residues 24-27 (YGSQ), Arg47, and Ser52. The active site involves His107. Position 133 (Gly133) interacts with NADP(+). A KARI C-terminal knotted domain is found at 182-327 (NFREETETDL…AKLRAMMPWI (146 aa)). Mg(2+) contacts are provided by Asp190, Glu194, Glu226, and Glu230. Residue Ser251 participates in substrate binding.

The protein belongs to the ketol-acid reductoisomerase family. It depends on Mg(2+) as a cofactor.

It catalyses the reaction (2R)-2,3-dihydroxy-3-methylbutanoate + NADP(+) = (2S)-2-acetolactate + NADPH + H(+). It carries out the reaction (2R,3R)-2,3-dihydroxy-3-methylpentanoate + NADP(+) = (S)-2-ethyl-2-hydroxy-3-oxobutanoate + NADPH + H(+). It participates in amino-acid biosynthesis; L-isoleucine biosynthesis; L-isoleucine from 2-oxobutanoate: step 2/4. The protein operates within amino-acid biosynthesis; L-valine biosynthesis; L-valine from pyruvate: step 2/4. Involved in the biosynthesis of branched-chain amino acids (BCAA). Catalyzes an alkyl-migration followed by a ketol-acid reduction of (S)-2-acetolactate (S2AL) to yield (R)-2,3-dihydroxy-isovalerate. In the isomerase reaction, S2AL is rearranged via a Mg-dependent methyl migration to produce 3-hydroxy-3-methyl-2-ketobutyrate (HMKB). In the reductase reaction, this 2-ketoacid undergoes a metal-dependent reduction by NADPH to yield (R)-2,3-dihydroxy-isovalerate. This chain is Ketol-acid reductoisomerase (NADP(+)), found in Burkholderia cenocepacia (strain HI2424).